Consider the following 236-residue polypeptide: tRNA (guanine-N(1)-)-methyltransferase (236 aa).

S-adenosyl-L-methionine is bound by residues G113 and 133-138 (IGDYVL).

The protein belongs to the RNA methyltransferase TrmD family. Homodimer.

The protein resides in the cytoplasm. It carries out the reaction guanosine(37) in tRNA + S-adenosyl-L-methionine = N(1)-methylguanosine(37) in tRNA + S-adenosyl-L-homocysteine + H(+). Functionally, specifically methylates guanosine-37 in various tRNAs. This Lachnospira eligens (strain ATCC 27750 / DSM 3376 / VPI C15-48 / C15-B4) (Eubacterium eligens) protein is tRNA (guanine-N(1)-)-methyltransferase.